A 184-amino-acid chain; its full sequence is UPF0316 protein BPUM_0594 (184 aa).

The next 3 membrane-spanning stretches (helical) occupy residues 9–29 (AFTM…FSTM), 41–61 (AAAF…SIVL), and 67–87 (IQNV…GMKI).

The protein belongs to the UPF0316 family.

Its subcellular location is the cell membrane. The chain is UPF0316 protein BPUM_0594 from Bacillus pumilus (strain SAFR-032).